The primary structure comprises 162 residues: Cyclic pyranopterin monophosphate synthase (162 aa).

Residues 79–81 (LCH) and 117–118 (ME) contribute to the substrate site. Residue aspartate 132 is part of the active site.

It belongs to the MoaC family. In terms of assembly, homohexamer; trimer of dimers.

The catalysed reaction is (8S)-3',8-cyclo-7,8-dihydroguanosine 5'-triphosphate = cyclic pyranopterin phosphate + diphosphate. It functions in the pathway cofactor biosynthesis; molybdopterin biosynthesis. In terms of biological role, catalyzes the conversion of (8S)-3',8-cyclo-7,8-dihydroguanosine 5'-triphosphate to cyclic pyranopterin monophosphate (cPMP). The chain is Cyclic pyranopterin monophosphate synthase from Bordetella avium (strain 197N).